We begin with the raw amino-acid sequence, 179 residues long: Protein GrpE (179 aa).

A disordered region spans residues 1–20 (MSEETKEEIKNEKVDEEVTE).

This sequence belongs to the GrpE family. As to quaternary structure, homodimer.

Its subcellular location is the cytoplasm. Participates actively in the response to hyperosmotic and heat shock by preventing the aggregation of stress-denatured proteins, in association with DnaK and GrpE. It is the nucleotide exchange factor for DnaK and may function as a thermosensor. Unfolded proteins bind initially to DnaJ; upon interaction with the DnaJ-bound protein, DnaK hydrolyzes its bound ATP, resulting in the formation of a stable complex. GrpE releases ADP from DnaK; ATP binding to DnaK triggers the release of the substrate protein, thus completing the reaction cycle. Several rounds of ATP-dependent interactions between DnaJ, DnaK and GrpE are required for fully efficient folding. This is Protein GrpE from Lactococcus lactis subsp. lactis (strain IL1403) (Streptococcus lactis).